Reading from the N-terminus, the 90-residue chain is UPF0223 protein LMHCC_1569 (90 aa).

This sequence belongs to the UPF0223 family.

In Listeria monocytogenes serotype 4a (strain HCC23), this protein is UPF0223 protein LMHCC_1569.